A 398-amino-acid chain; its full sequence is uncharacterized protein (398 aa).

10 helical membrane passes run 43–65 (PILP…VGGL), 89–108 (IFVV…LGLS), 156–173 (TAGA…ILYL), 180–198 (IILI…LYFV), 224–246 (LFIL…ILRA), 259–281 (IIIP…IPFG), 291–311 (SVLT…AYFI), 316–338 (LILL…KAYV), 351–373 (LGLF…GYLW), and 380–397 (TFLY…LLLF).

The protein belongs to the major facilitator superfamily.

It localises to the cell membrane. This is an uncharacterized protein from Methanocaldococcus jannaschii (strain ATCC 43067 / DSM 2661 / JAL-1 / JCM 10045 / NBRC 100440) (Methanococcus jannaschii).